The sequence spans 423 residues: Diels-Alderase pyiF (423 aa).

Residues 1–17 (MLPSFIFVYSLLATATA) form the signal peptide. N-linked (GlcNAc...) asparagine glycans are attached at residues N60, N92, and N219.

This sequence belongs to the Diels-Alderase family.

The protein operates within mycotoxin biosynthesis. Diels-Alderase; part of the gene cluster that mediates the biosynthesis of the mycotoxin pyrichalasin H, a tyrosine-derived cytochalasan that inhibits the growth of rice seedlings, but also inhibits lymphocyte capping and actin polymerization and alters cell morphology. Pyrichalasin H is indicated as the responsible agent for the genus-specific pathogenicity of M.grisea toward crabgrass. The first step in the pathway is catalyzed by the O-methyltransferase pyiA which methylates free tyrosine to generate the precursor O-methyltyrosine. The hybrid PKS-NRPS pyiS, assisted by the enoyl reductase pyiC, are responsible for fusion of the O-methyltyrosine precursor and the polyketide backbone. The polyketide synthase module (PKS) of pyiS is responsible for the synthesis of the polyketide backbone and the downstream nonribosomal peptide synthetase (NRPS) amidates the carboxyl end of the polyketide with the O-methyltyrosine precursor. As the NRPS A-domain demonstrates substrate tolerance, pyiS can also use phenylalanine, tyrosine and even para-chlorophenylalanine as amino acid precursor, which leads to the production of novel cytochalasans, including halogenated cytochalasans. Because pyiS lacks a designated enoylreductase (ER) domain, the required activity is provided the enoyl reductase pyiC. Reduction by the hydrolyase pyiE leads to 1,5-dihydropyrrolone, which is substrate for dehydration and intra-molecular Diels-Alder cyclization by the Diels-Alderase pyiF to yield the required isoindolone-fused macrocycle. The tailoring cytochrome P450 monooxygenases piyD and piyG catalyze the hydroxylation at C-18 and C-7, respectivily, whereas the short-chain dehydrogenase/reductase pyiH reduces the carbonyl at C-21 in preparation for the transfer of an acetyl group by the acetyltransferase pyiB. These 3 reactions whose order is not clear yet, lead to the production of O-methylpyrichalasin J, a deacetylated pyrichalasin H. Finally, pyiB to converts O-methylpyrichalasin J into the final product pyrichalasin H via acetylation of C-21. The sequence is that of Diels-Alderase pyiF from Pyricularia grisea (Crabgrass-specific blast fungus).